A 112-amino-acid chain; its full sequence is Inner membrane assembly complex subunit 17 (112 aa).

Residues 1-24 constitute a mitochondrion transit peptide; sequence MLRKLPINFAKWTVKKVPVQQKRF. Over 25 to 44 the chain is Mitochondrial matrix; that stretch reads NSQQKEISPHIMFYKNYARP. Residues 45–62 traverse the membrane as a helical segment; it reads LGKVTLFALATYYGLEIV. Residues 63-112 are Mitochondrial intermembrane-facing; sequence WWKLDASEQEAIKNSKLLICESSFSLLTFRRITEFRECEIKTRDLYDPEI.

This sequence belongs to the INA17 family. In terms of assembly, component of the inner membrane assembly (INA) complex. Interacts with a subset of F(1)F(0)-ATP synthase subunits of the F(1)-domain and the peripheral stalk.

The protein localises to the mitochondrion inner membrane. Its function is as follows. Component of the INA complex (INAC) that promotes the biogenesis of mitochondrial F(1)F(0)-ATP synthase. INAC facilitates the assembly of the peripheral stalk and promotes the assembly of the catalytic F(1)-domain with the membrane-embedded F(0)-domain. In Schizosaccharomyces pombe (strain 972 / ATCC 24843) (Fission yeast), this protein is Inner membrane assembly complex subunit 17.